A 432-amino-acid polypeptide reads, in one-letter code: Fibroleukin (432 aa).

The N-terminal stretch at 1 to 19 (MRLPGWLWLSSAVLAACRA) is a signal peptide. The N-linked (GlcNAc...) asparagine glycan is linked to N24. A coiled-coil region spans residues 71 to 157 (GSMEEVLKEV…QGRLETLHLV (87 aa)). A disordered region spans residues 100 to 122 (QADDHRDPGGNGGNGAETAEDSR). N-linked (GlcNAc...) asparagine glycosylation is found at N172, N228, N256, and N329. The 233-residue stretch at 197–429 (PVQHLIYKDC…QAKMMIRPKN (233 aa)) folds into the Fibrinogen C-terminal domain. C206 and C235 are disulfide-bonded. C364 and C377 are joined by a disulfide.

Homotetramer; disulfide-linked. As to expression, constitutively expressed in cytotoxic T-cells.

Its subcellular location is the secreted. Converts prothrombin to thrombin. This Mus musculus (Mouse) protein is Fibroleukin (Fgl2).